Here is a 240-residue protein sequence, read N- to C-terminus: Orotidine 5'-phosphate decarboxylase (240 aa).

Substrate-binding positions include D10, K33, 60–69 (DLKLHDIPNT), T123, R185, Q194, G214, and R215. K62 (proton donor) is an active-site residue.

This sequence belongs to the OMP decarboxylase family. Type 1 subfamily. Homodimer.

It catalyses the reaction orotidine 5'-phosphate + H(+) = UMP + CO2. Its pathway is pyrimidine metabolism; UMP biosynthesis via de novo pathway; UMP from orotate: step 2/2. Its function is as follows. Catalyzes the decarboxylation of orotidine 5'-monophosphate (OMP) to uridine 5'-monophosphate (UMP). This is Orotidine 5'-phosphate decarboxylase from Lactobacillus delbrueckii subsp. bulgaricus (strain ATCC 11842 / DSM 20081 / BCRC 10696 / JCM 1002 / NBRC 13953 / NCIMB 11778 / NCTC 12712 / WDCM 00102 / Lb 14).